Reading from the N-terminus, the 385-residue chain is Heterogeneous nuclear ribonucleoprotein 87F (385 aa).

2 consecutive RRM domains span residues 24-101 (RKLF…RAVP) and 115-192 (KKLF…KAIA). Disordered stretches follow at residues 192–289 (AKQD…WNGG) and 305–385 (GNGG…NRRY). Gly residues-rich tracts occupy residues 199–289 (QGGG…WNGG) and 305–317 (GNGG…GGFG). The segment covering 319-336 (EYQQSYGGGPQRNSNFGN) has biased composition (polar residues). Composition is skewed to gly residues over residues 344–362 (QGGG…GQGF) and 369–385 (TGGG…NRRY).

It localises to the nucleus. It is found in the cytoplasm. In terms of biological role, this protein is a component of ribonucleosomes. Could be needed to organize a concentration gradient of a dorsalizing morphogen (Dm) originating in the germinal vesicle. The chain is Heterogeneous nuclear ribonucleoprotein 87F (Hrb87F) from Drosophila melanogaster (Fruit fly).